The primary structure comprises 161 residues: Vasotocin-neurophysin VT (161 aa).

Residues 1–22 (MSAMGWTLLAAALLAISAQSNG) form the signal peptide. C23 and C28 form a disulfide bridge. Residue G31 is modified to Glycine amide. Intrachain disulfides connect C43–C91, C46–C58, C52–C81, C59–C71, C99–C111, C105–C123, and C112–C117.

This sequence belongs to the vasopressin/oxytocin family.

The protein localises to the secreted. In terms of biological role, vasotocin is an antidiuretic hormone. This chain is Vasotocin-neurophysin VT, found in Eptatretus stoutii (Pacific hagfish).